A 475-amino-acid chain; its full sequence is MSDIRHALLRRDPLSAAKEVLYHLDISLGSALQSSAGPPAGLEKSTVELVEEFIFHVSKDRNIQSKRMSCVQELQLLEIICSYFQEQSKDAIRQVIFSALFSLQGNKADESRMAMLGKLVSMSIAVCRVPILECAAIWLQRTHSAWCVRLAQVLMEDYCTLVPCAISTLQNICSASPRFCCQLITAVTALYDFSTDELTPPPALLEMLVGWITEDPRLLLLTFINSPLNSSLPLGCLEITPLLGLLRWCVKAPLAYHRGRKSAMTNGHGDGEKGTAYEELYSKLHLSVLQVFLMLQVHLTEKNMFCRLTVLPVESVAALIEEVGRLCEKLAPLLDASHIQLALDRLAQALQVAMATGALLCAREDLRALCSRLPHNNLLQLVMSGPVVQPPPHSSPFQPNMYPHIHPGRPSPLSPHSPHQSTLSSPHSPHTVLTAHPTHPALAPHRPLTAHATHPALSPHAFHPASIAFPYRPIR.

The interval 402–444 (YPHIHPGRPSPLSPHSPHQSTLSSPHSPHTVLTAHPTHPALAP) is disordered. Positions 416–430 (HSPHQSTLSSPHSPH) are enriched in low complexity.

The protein belongs to the Integrator subunit 15 family. In terms of assembly, component of the Integrator complex, composed of core subunits INTS1, INTS2, INTS3, INTS4, INTS5, INTS6, INTS7, INTS8, INTS9/RC74, INTS10, INTS11/CPSF3L, INTS12, INTS13, INTS14 and INTS15. The core complex associates with protein phosphatase 2A subunits PPP2CA and PPP2R1A, to form the Integrator-PP2A (INTAC) complex. INTS15 is part of the tail subcomplex, composed of INTS10, INTS13, INTS14 and INTS15.

The protein resides in the nucleus. Its subcellular location is the chromosome. Functionally, component of the integrator complex, a multiprotein complex that terminates RNA polymerase II (Pol II) transcription in the promoter-proximal region of genes. The integrator complex provides a quality checkpoint during transcription elongation by driving premature transcription termination of transcripts that are unfavorably configured for transcriptional elongation: the complex terminates transcription by (1) catalyzing dephosphorylation of the C-terminal domain (CTD) of Pol II subunit POLR2A/RPB1 and SUPT5H/SPT5, (2) degrading the exiting nascent RNA transcript via endonuclease activity and (3) promoting the release of Pol II from bound DNA. The integrator complex is also involved in terminating the synthesis of non-coding Pol II transcripts, such as enhancer RNAs (eRNAs), small nuclear RNAs (snRNAs), telomerase RNAs and long non-coding RNAs (lncRNAs). INTS15 is part of the integrator tail module that acts as a platform for the recruitment of transcription factors at promoters. Within the integrator complex, INTS15 is required to bridge different integrator modules. This is Integrator complex subunit 15 (ints15) from Danio rerio (Zebrafish).